The primary structure comprises 331 residues: Glycerol-3-phosphate dehydrogenase [NAD(P)+] (331 aa).

Positions 10, 11, and 101 each coordinate NADPH. Sn-glycerol 3-phosphate contacts are provided by Lys101, Gly132, and Ser134. Ala136 provides a ligand contact to NADPH. Sn-glycerol 3-phosphate is bound by residues Lys188, Asp241, Ser251, Arg252, and Asn253. The active-site Proton acceptor is the Lys188. An NADPH-binding site is contributed by Arg252. NADPH-binding residues include Val276 and Glu278.

The protein belongs to the NAD-dependent glycerol-3-phosphate dehydrogenase family.

It localises to the cytoplasm. It catalyses the reaction sn-glycerol 3-phosphate + NAD(+) = dihydroxyacetone phosphate + NADH + H(+). The catalysed reaction is sn-glycerol 3-phosphate + NADP(+) = dihydroxyacetone phosphate + NADPH + H(+). Its pathway is membrane lipid metabolism; glycerophospholipid metabolism. Catalyzes the reduction of the glycolytic intermediate dihydroxyacetone phosphate (DHAP) to sn-glycerol 3-phosphate (G3P), the key precursor for phospholipid synthesis. The protein is Glycerol-3-phosphate dehydrogenase [NAD(P)+] of Acholeplasma laidlawii (strain PG-8A).